The sequence spans 575 residues: Probable ferredoxin/ferredoxin--NADP reductase (575 aa).

4Fe-4S ferredoxin-type domains are found at residues Pro2 to Asp29 and Glu37 to Arg66. Residues Cys9, Cys15, Cys19, Cys46, Cys49, Cys52, and Cys56 each contribute to the [4Fe-4S] cluster site. Positions Val115–Leu575 are ferredoxin--NADP reductase. Residues Ala123, Glu143, Leu151, and Ile187 each contribute to the FAD site. NADP(+) is bound by residues Arg213, Asn258–Val261, Arg302–Arg303, and Glu314. FAD is bound by residues Trp456 and Gly463–Ile465. Gly463 contacts NADP(+).

The protein in the C-terminal section; belongs to the ferredoxin--NADP reductase family. The cofactor is [4Fe-4S] cluster. FAD serves as cofactor.

The enzyme catalyses 2 reduced [2Fe-2S]-[ferredoxin] + NADP(+) + H(+) = 2 oxidized [2Fe-2S]-[ferredoxin] + NADPH. In Mycobacterium bovis (strain ATCC BAA-935 / AF2122/97), this protein is Probable ferredoxin/ferredoxin--NADP reductase (fprB).